The sequence spans 313 residues: MTENYKHTSVLLDEAVNGLNIRPDGIYIDGTFGRGGHSRLILSQLGAEGRLLAIDRDPQAIAVAKTIDDPRFSFVHGPFSALADYVSERDLTGKIDGILLDLGVSSPQLDDAERGFSFMRDGPLDMRMDPTRGQSAAEWLLTAEEADIAWVIKTFGEERFGKRIARGIVERNRIEPMTRTKELAEVVTAATPVKDKFKHPATRTFQAVRIWVNSELEEIELALKSSLGVLAPGGRLSIISFHSLEDRIVKRFMREQSRGPQVPAGLPMTEDQLRKLGGRYLRVLGKMMPGEEEVAENPRARSSVLRIAERTNA.

Residues 35–37 (GGH), D55, F79, D101, and Q108 each bind S-adenosyl-L-methionine.

This sequence belongs to the methyltransferase superfamily. RsmH family.

The protein localises to the cytoplasm. The catalysed reaction is cytidine(1402) in 16S rRNA + S-adenosyl-L-methionine = N(4)-methylcytidine(1402) in 16S rRNA + S-adenosyl-L-homocysteine + H(+). Specifically methylates the N4 position of cytidine in position 1402 (C1402) of 16S rRNA. In Enterobacter sp. (strain 638), this protein is Ribosomal RNA small subunit methyltransferase H.